Consider the following 120-residue polypeptide: Large ribosomal subunit protein bL19 (120 aa).

It belongs to the bacterial ribosomal protein bL19 family.

Functionally, this protein is located at the 30S-50S ribosomal subunit interface and may play a role in the structure and function of the aminoacyl-tRNA binding site. The polypeptide is Large ribosomal subunit protein bL19 (Synechococcus sp. (strain ATCC 27144 / PCC 6301 / SAUG 1402/1) (Anacystis nidulans)).